Consider the following 117-residue polypeptide: Large ribosomal subunit protein uL18 (117 aa).

Belongs to the universal ribosomal protein uL18 family. Part of the 50S ribosomal subunit; part of the 5S rRNA/L5/L18/L25 subcomplex. Contacts the 5S and 23S rRNAs.

In terms of biological role, this is one of the proteins that bind and probably mediate the attachment of the 5S RNA into the large ribosomal subunit, where it forms part of the central protuberance. This is Large ribosomal subunit protein uL18 from Sphingopyxis alaskensis (strain DSM 13593 / LMG 18877 / RB2256) (Sphingomonas alaskensis).